A 278-amino-acid polypeptide reads, in one-letter code: Formamidopyrimidine-DNA glycosylase (278 aa).

Pro2 acts as the Schiff-base intermediate with DNA in catalysis. Catalysis depends on Glu3, which acts as the Proton donor. Residue Lys58 is the Proton donor; for beta-elimination activity of the active site. DNA-binding residues include His92 and Arg111. An FPG-type zinc finger spans residues 239-273 (HVYGKKGVPCERCGTPIEKIKVAQRGTHFCPKCQI). Arg263 acts as the Proton donor; for delta-elimination activity in catalysis.

This sequence belongs to the FPG family. Monomer. Zn(2+) serves as cofactor.

The enzyme catalyses Hydrolysis of DNA containing ring-opened 7-methylguanine residues, releasing 2,6-diamino-4-hydroxy-5-(N-methyl)formamidopyrimidine.. The catalysed reaction is 2'-deoxyribonucleotide-(2'-deoxyribose 5'-phosphate)-2'-deoxyribonucleotide-DNA = a 3'-end 2'-deoxyribonucleotide-(2,3-dehydro-2,3-deoxyribose 5'-phosphate)-DNA + a 5'-end 5'-phospho-2'-deoxyribonucleoside-DNA + H(+). Involved in base excision repair of DNA damaged by oxidation or by mutagenic agents. Acts as a DNA glycosylase that recognizes and removes damaged bases. Has a preference for oxidized purines, such as 7,8-dihydro-8-oxoguanine (8-oxoG). Has AP (apurinic/apyrimidinic) lyase activity and introduces nicks in the DNA strand. Cleaves the DNA backbone by beta-delta elimination to generate a single-strand break at the site of the removed base with both 3'- and 5'-phosphates. The protein is Formamidopyrimidine-DNA glycosylase of Latilactobacillus sakei subsp. sakei (strain 23K) (Lactobacillus sakei subsp. sakei).